The following is a 333-amino-acid chain: FAD-dependent monooxygenase pytG (333 aa).

A helical transmembrane segment spans residues 6–26; it reads LPNVSVAIIGAGIGGLTLGAF. Positions 38 and 109 each coordinate FAD. N303 carries an N-linked (GlcNAc...) asparagine glycan.

Belongs to the paxM FAD-dependent monooxygenase family. It depends on FAD as a cofactor.

It localises to the membrane. It functions in the pathway secondary metabolite biosynthesis. FAD-dependent monooxygenase; part of the gene cluster that mediates the biosynthesis of pyranterreones, a family of antioxidative compounds. The first step of pyranonigrins biosynthesis is performed by the hybrid PKS-NRPS synthetase pytA that condenses 4 malonyl-CoA units ato the acetyl starter unit by the modular PKS of pytA. The acyl chain is then connected to an L-serine through the amide bond by the modular NRPS of pytA. A tetramic acid is formed and released from the PKS-NRPS pytA to give pyranterreone 5 with the help of the thioesterase pytI. Pyranterreone 5 could be methylated by pytC to afford pyranterreone 6. Both pyranterreones 5 and 6 are subsequently oxidized by the FAD-linked oxidoreductase pytB and the cytochrome P450 monooxygenase pytD to form the fused gamma-pyrone core, resulting in pyranterreones 7 and 11, respectively. The hydroxy group at C-8 of pyranterreones 7 and 11 are dehydrated by the aspartyl protease pytH to form a delta-7 double bond to give pyranterreones 3 and 1, 2 accordingly. The exo-methylene of pyranterreone 3 could be reduced into a pendant methyl by reductase pytE to provide pyranterreone 4, also known as cordylactam. Pyranterreone 4 can be reconverted to pyranterreone 3 through pytB-catalyzed dehydrogenation or further oxidized to pyranterreones 9 and 10. This is FAD-dependent monooxygenase pytG from Aspergillus terreus (strain NIH 2624 / FGSC A1156).